We begin with the raw amino-acid sequence, 341 residues long: HTH-type transcriptional repressor PurR (341 aa).

In terms of domain architecture, HTH lacI-type spans A2–V56. Positions I4–N23 form a DNA-binding region, H-T-H motif. The DNA-binding element occupies S48–V56. Positions 73, 190, 192, 221, and 275 each coordinate hypoxanthine.

In terms of assembly, homodimer.

It functions in the pathway purine metabolism; purine nucleotide biosynthesis [regulation]. In terms of biological role, is the main repressor of the genes involved in the de novo synthesis of purine nucleotides, regulating purB, purC, purEK, purF, purHD, purL, purMN and guaBA expression. PurR is allosterically activated to bind its cognate DNA by binding the purine corepressors, hypoxanthine or guanine, thereby effecting transcription repression. This is HTH-type transcriptional repressor PurR from Shigella sonnei (strain Ss046).